We begin with the raw amino-acid sequence, 300 residues long: Ribonuclease HIII (300 aa).

Residues 83 to 300 (IPIIGSDEVG…THKAQALLTK (218 aa)) form the RNase H type-2 domain. Residues D89, E90, and D194 each contribute to the a divalent metal cation site.

The protein belongs to the RNase HII family. RnhC subfamily. Requires Mn(2+) as cofactor. It depends on Mg(2+) as a cofactor.

The protein localises to the cytoplasm. It catalyses the reaction Endonucleolytic cleavage to 5'-phosphomonoester.. Endonuclease that specifically degrades the RNA of RNA-DNA hybrids. This is Ribonuclease HIII from Streptococcus pyogenes serotype M49 (strain NZ131).